The sequence spans 62 residues: uncharacterized protein (62 aa).

The protein localises to the mitochondrion. This is an uncharacterized protein from Marchantia polymorpha (Common liverwort).